We begin with the raw amino-acid sequence, 589 residues long: C-type lectin domain family 4 member F (589 aa).

Residues Met1–Gln39 lie on the Cytoplasmic side of the membrane. The helical; Signal-anchor for type II membrane protein transmembrane segment at Ala40–Val60 threads the bilayer. Topologically, residues Gln61–Asn589 are extracellular. Asn79, Asn113, Asn207, Asn230, Asn244, Asn312, Asn385, and Asn399 each carry an N-linked (GlcNAc...) asparagine glycan. Positions Asn476–Asn589 constitute a C-type lectin domain.

It is found in the membrane. Receptor with an affinity for galactose and fucose. Could be involved in endocytosis. In Homo sapiens (Human), this protein is C-type lectin domain family 4 member F (CLEC4F).